The primary structure comprises 362 residues: tRNA 2-selenouridine synthase (362 aa).

The 124-residue stretch at 14–137 (LANETPIIDV…LRQATIEMTN (124 aa)) folds into the Rhodanese domain. The active-site S-selanylcysteine intermediate is Cys-97.

The protein belongs to the SelU family. Monomer.

The catalysed reaction is 5-methylaminomethyl-2-thiouridine(34) in tRNA + selenophosphate + (2E)-geranyl diphosphate + H2O + H(+) = 5-methylaminomethyl-2-selenouridine(34) in tRNA + (2E)-thiogeraniol + phosphate + diphosphate. The enzyme catalyses 5-methylaminomethyl-2-thiouridine(34) in tRNA + (2E)-geranyl diphosphate = 5-methylaminomethyl-S-(2E)-geranyl-thiouridine(34) in tRNA + diphosphate. It carries out the reaction 5-methylaminomethyl-S-(2E)-geranyl-thiouridine(34) in tRNA + selenophosphate + H(+) = 5-methylaminomethyl-2-(Se-phospho)selenouridine(34) in tRNA + (2E)-thiogeraniol. It catalyses the reaction 5-methylaminomethyl-2-(Se-phospho)selenouridine(34) in tRNA + H2O = 5-methylaminomethyl-2-selenouridine(34) in tRNA + phosphate. Functionally, involved in the post-transcriptional modification of the uridine at the wobble position (U34) of tRNA(Lys), tRNA(Glu) and tRNA(Gln). Catalyzes the conversion of 2-thiouridine (S2U-RNA) to 2-selenouridine (Se2U-RNA). Acts in a two-step process involving geranylation of 2-thiouridine (S2U) to S-geranyl-2-thiouridine (geS2U) and subsequent selenation of the latter derivative to 2-selenouridine (Se2U) in the tRNA chain. The chain is tRNA 2-selenouridine synthase from Proteus mirabilis (strain HI4320).